Reading from the N-terminus, the 453-residue chain is Validoxylamine A glucosyltransferase (453 aa).

The protein belongs to the glycosyltransferase 2 family. The cofactor is Mn(2+).

The enzyme catalyses validoxylamine A + UDP-alpha-D-glucose = validamycin A + UDP + H(+). In terms of biological role, involved in the biosynthesis of the antifungal agent validamycin A. Catalyzes the final attachment of glucose from UDP-alpha-D-glucose to validoxylamine A to yield validamycin A. The sequence is that of Validoxylamine A glucosyltransferase from Streptomyces hygroscopicus subsp. limoneus.